The sequence spans 639 residues: Polypeptide N-acetylgalactosaminyltransferase 15 (639 aa).

The Cytoplasmic segment spans residues 1 to 11 (MLLRKRYRHRP). Residues 12–34 (CRLQFLLLLLMLGCVLMMVAMLH) form a helical; Signal-anchor for type II membrane protein membrane-spanning segment. The Lumenal portion of the chain corresponds to 35 to 639 (PPHHTLHQTV…FDQINAVDER (605 aa)). The segment at 106–155 (RNQSQGRRGGSYRLIKQPRRQDKEAPKRDWGADEDGEVSEEEELTPFSLD) is disordered. The N-linked (GlcNAc...) asparagine glycan is linked to Asn-107. Basic and acidic residues predominate over residues 124–136 (RRQDKEAPKRDWG). Residues 137 to 149 (ADEDGEVSEEEEL) are compositionally biased toward acidic residues. 5 cysteine pairs are disulfide-bonded: Cys-181/Cys-412, Cys-403/Cys-482, Cys-517/Cys-536, Cys-562/Cys-575, and Cys-603/Cys-620. Positions 190–299 (LPTASVILCF…PGWLEPLLSR (110 aa)) are catalytic subdomain A. Asp-231 and Arg-260 together coordinate substrate. Residues Asp-283, His-285, and His-417 each contribute to the Mn(2+) site. Positions 358-420 (PIRSPVVPGE…PCSRVGHIYQ (63 aa)) are catalytic subdomain B. A Ricin B-type lectin domain is found at 504–631 (SFSGKLHNTG…GKARQQWRFD (128 aa)). The N-linked (GlcNAc...) asparagine glycan is linked to Asn-574.

It belongs to the glycosyltransferase 2 family. GalNAc-T subfamily. Mn(2+) is required as a cofactor. As to expression, widely expressed. Highly expressed in small intestine, placenta, spleen, cerebral cortex and ovary. Expressed at intermediate level in uterus, mammary gland, stomach, cerebellum and whole brain. Weakly expressed in fetal brain, bone marrow, thyroid gland, thymus, heart, skeletal muscle, lung, liver, colon, pancreas, kidney and testis. Not expressed in leukocyte. Expressed in both normal and osteoarthritic cartilage. Expressed at low level in chondrocytes in all zones of both normal and osteoarthritic cartilage.

It is found in the golgi apparatus membrane. The enzyme catalyses L-seryl-[protein] + UDP-N-acetyl-alpha-D-galactosamine = a 3-O-[N-acetyl-alpha-D-galactosaminyl]-L-seryl-[protein] + UDP + H(+). It catalyses the reaction L-threonyl-[protein] + UDP-N-acetyl-alpha-D-galactosamine = a 3-O-[N-acetyl-alpha-D-galactosaminyl]-L-threonyl-[protein] + UDP + H(+). It participates in protein modification; protein glycosylation. Its function is as follows. Catalyzes the initial reaction in O-linked oligosaccharide biosynthesis, the transfer of an N-acetyl-D-galactosamine residue to a serine or threonine residue on the protein receptor. Although it displays a much weaker activity toward all substrates tested compared to GALNT2, it is able to transfer up to seven GalNAc residues to the Muc5AC peptide, suggesting that it can fill vicinal Thr/Ser residues in cooperation with other GALNT proteins. Prefers Muc1a as substrate. In Homo sapiens (Human), this protein is Polypeptide N-acetylgalactosaminyltransferase 15 (GALNT15).